Reading from the N-terminus, the 547-residue chain is Glucose-6-phosphate isomerase (547 aa).

Residue E352 is the Proton donor of the active site. Catalysis depends on residues H383 and K511.

The protein belongs to the GPI family.

Its subcellular location is the cytoplasm. The enzyme catalyses alpha-D-glucose 6-phosphate = beta-D-fructose 6-phosphate. Its pathway is carbohydrate biosynthesis; gluconeogenesis. The protein operates within carbohydrate degradation; glycolysis; D-glyceraldehyde 3-phosphate and glycerone phosphate from D-glucose: step 2/4. Catalyzes the reversible isomerization of glucose-6-phosphate to fructose-6-phosphate. This Rhodospirillum rubrum (strain ATCC 11170 / ATH 1.1.1 / DSM 467 / LMG 4362 / NCIMB 8255 / S1) protein is Glucose-6-phosphate isomerase.